A 105-amino-acid polypeptide reads, in one-letter code: Small ribosomal subunit protein eS24 (105 aa).

This sequence belongs to the eukaryotic ribosomal protein eS24 family.

The protein is Small ribosomal subunit protein eS24 of Haloquadratum walsbyi (strain DSM 16790 / HBSQ001).